The sequence spans 466 residues: MIPVIALVGRPNVGKSTLFNRLTNSRDALVADYPGLTRDRKYGEARLENRRFIVIDTGGISGEEEGIDSAMAGQSLLAIQEADIVLFIVDSRVGLNPADELIARHLRVHNKKTYVVANKIDGMDPDIALAPFYELGMGEVHPTTATHGRGVRSLMEDVLAEYPEIPEEEQQGEATGIKIAIVGRPNVGKSTLVNRLLGEDRVVVYDQPGTTRDSIYINYTRFDKPYTLIDTAGVRRRKNIDLAVEKFSIVKTMQAIADANVVILVMDASEGIVEQDLHLMGTAIEAGRALVIALNKWDGLDESHKYYVKNELERRLRFVDFANIHFISALHGTGVGNLYKSIEQAYQSATDRFSTNYLTRILQDAVREHQPPMINGRRIKLRYAHPGGHNPPVIIVHGNQTDDVPGHYVKYLEKTYRRVLDLHGTPIRIEFRTTDNPYEARKKSMTRQQFIQKRRKEERDRNNPRR.

EngA-type G domains follow at residues 3–166 (PVIA…PEIP) and 177–350 (IKIA…QSAT). GTP-binding positions include 9–16 (GRPNVGKS), 56–60 (DTGGI), 118–121 (NKID), 183–190 (GRPNVGKS), 230–234 (DTAGV), and 295–298 (NKWD). The KH-like domain maps to 351–435 (DRFSTNYLTR…PIRIEFRTTD (85 aa)). Residues 442–466 (KKSMTRQQFIQKRRKEERDRNNPRR) are disordered. Residues 455–466 (RKEERDRNNPRR) show a composition bias toward basic and acidic residues.

Belongs to the TRAFAC class TrmE-Era-EngA-EngB-Septin-like GTPase superfamily. EngA (Der) GTPase family. In terms of assembly, associates with the 50S ribosomal subunit.

Functionally, GTPase that plays an essential role in the late steps of ribosome biogenesis. In Cellvibrio japonicus (strain Ueda107) (Pseudomonas fluorescens subsp. cellulosa), this protein is GTPase Der.